Here is a 2162-residue protein sequence, read N- to C-terminus: Calpain-type cysteine protease ADL1 (2162 aa).

The N-terminal stretch at 1–33 (MEEEEHRGVVLVCSICGFLFAVLGPLSFWILWA) is a signal peptide. The Extracellular portion of the chain corresponds to 34–70 (VNWRPWRLYSWIYARKWPAYVQGPQLSTLCSFFTLFA). The chain crosses the membrane as a helical span at residues 71-91 (WLVVVSPITVLLVWGGILIAL). Residues 92 to 95 (LERN) lie on the Cytoplasmic side of the membrane. The helical transmembrane segment at 96–116 (IIGLAVIMVGVALLLSFYSIM) threads the bilayer. At 117-127 (LWWRTQWQSSK) the chain is on the extracellular side. The chain crosses the membrane as a helical span at residues 128 to 148 (AVAYLLLLAVGLLCAYEFCAV). Residues 149–164 (YVTTGASASELNSPSG) lie on the Cytoplasmic side of the membrane. Residues 165-185 (FFFGVSAISLAINMLFISKIL) traverse the membrane as a helical segment. Topologically, residues 186-236 (FNGSGFDVDEYVRRLYKFAYSDCVEVAPVSCSPDPPDPSELYMTKSSRVLH) are extracellular. A helical transmembrane segment spans residues 237 to 257 (LGLLYLCSLMVLVVYSILYGL). Residues 258–264 (TSKEARW) lie on the Cytoplasmic side of the membrane. Residues 265-285 (LGALTSVAVVILDWNLGLCSF) form a helical membrane-spanning segment. The Extracellular portion of the chain corresponds to 286 to 294 (RFELLKSRM). A helical transmembrane segment spans residues 295 to 315 (IALFVAGTSRVFLICFGVHYW). The Cytoplasmic segment spans residues 316–320 (YLGHC). Residues 321–341 (ISYAFVASVLLAAAVSCWLSI) traverse the membrane as a helical segment. Over 342–626 (SNPSVARIDA…LMFHQVAGSP (285 aa)) the chain is Extracellular. Residues 366 to 403 (KGQTSSSNSSDGCGSSVKRSSGSVEAGPHGNATDSMYR) form a disordered region. The segment covering 370 to 381 (SSSNSSDGCGSS) has biased composition (low complexity). Residues 627 to 647 (IRAFVVFTLIFIIETVTVAVH) traverse the membrane as a helical segment. Topologically, residues 648-663 (RPKPIKVINATHEQFE) are cytoplasmic. Residues 664 to 684 (FGFSILLLSPVVCSIMAFIWS) traverse the membrane as a helical segment. Residues 685-697 (LCAEEMTMTSKPR) are Extracellular-facing. The helical transmembrane segment at 698–718 (KYGFIAWLLSTCVGLLLSFLS) threads the bilayer. Over 719 to 722 (KSSV) the chain is Cytoplasmic. Residues 723 to 743 (ILGLSLTVPLMVACLSFAIPI) form a helical membrane-spanning segment. The Extracellular segment spans residues 744-773 (WMRNGYRFWIPGGELDSRENIRQAPGKKER). A helical membrane pass occupies residues 774-794 (ALFAISITVFTASVIGLGAIV). The Cytoplasmic segment spans residues 795 to 825 (SAKPLDALGYKGWDADKKSFYSPYATSMYLG). A helical membrane pass occupies residues 826 to 846 (WALSSTIAVLATGVIPIVAWF). Over 847–856 (ATYRFSPSSA) the chain is Extracellular. A helical membrane pass occupies residues 857–877 (ICVGLFATVLVSFCGVSYWGV). The Cytoplasmic portion of the chain corresponds to 878 to 890 (VNSRQDGVPLKAD). The helical transmembrane segment at 891–911 (FLAALLPLLCIPAVFSLFTGM) threads the bilayer. The Extracellular portion of the chain corresponds to 912 to 924 (YKWKDDDWKISRG). Residues 925–945 (VYLFVGMGVLLLLGAISAVIV) form a helical membrane-spanning segment. Over 946–949 (TIRP) the chain is Cytoplasmic. A helical transmembrane segment spans residues 950-970 (WTVGVACLLVILFLVFAIGVI). The Extracellular portion of the chain corresponds to 971-984 (HYWTSNNFYLTRTQ). Residues 985-1005 (MLLVCSLAFLLALAAFLMGLF) traverse the membrane as a helical segment. The Cytoplasmic segment spans residues 1006–1019 (QEKPFVGASIGYFS). Residues 1020–1040 (FLFLLTGRALTVLLSPPIVVY) form a helical membrane-spanning segment. Residues 1041–1063 (SPRVLPVYVYDAHADSAKNVSYA) lie on the Extracellular side of the membrane. The chain crosses the membrane as a helical span at residues 1064 to 1084 (FLILYGIALATEVWGVIASLI). At 1085 to 2162 (LNPPFIGAAI…TKAPIKLEAV (1078 aa)) the chain is on the cytoplasmic side. A phosphoserine mark is found at Ser-1372 and Ser-1377. The 194-residue stretch at 1418–1611 (TGRHCGEIDL…ICSAEYGLFD (194 aa)) folds into the Calpain catalytic 1 domain. The residue at position 1668 (Ser-1668) is a Phosphoserine. The 303-residue stretch at 1706–2008 (NFTDQEFPPD…FRSIYVCRVY (303 aa)) folds into the Calpain catalytic 2 domain. Catalysis depends on residues Cys-1772, His-1930, and Asn-1950.

This sequence belongs to the peptidase C2 family. In terms of processing, autocatalytic proteolytic cleavage leading to the production of mainly cytoplasmic localized subproducts of about 85 and 120 kDa. As to expression, ubiquitously expressed with higher levels in embryos, vasculatures, leaf primordia, leaf margins, and shoot apical meristem (SAM).

Its subcellular location is the endoplasmic reticulum membrane. It localises to the cytoplasm. The protein localises to the cell membrane. It is found in the endosome membrane. Functionally, essential protease involved in epiderm development. Required for aleurone cell development in the endosperm probably by maintaining and restricting the aleurone and embryonic epidermal L1 cell-layer fates as well as meristems organization. Involved in the maintenance of adaxial/abaxial axis information in developing leaves, probably by regulating cell proliferation and expansion. Does not need calcium ions to be active. This chain is Calpain-type cysteine protease ADL1 (ADL1), found in Oryza sativa subsp. japonica (Rice).